Consider the following 407-residue polypeptide: Tyrosine--tRNA ligase 1 (407 aa).

Tyr-35 contributes to the L-tyrosine binding site. A 'HIGH' region motif is present at residues 40-49 (PTGDSLHVGH). Residues Tyr-168 and Gln-172 each contribute to the L-tyrosine site. A 'KMSKS' region motif is present at residues 228–232 (KMGKT). Lys-231 serves as a coordination point for ATP. The S4 RNA-binding domain occupies 340–406 (SSILDVLVHT…GKKKYYKIVI (67 aa)).

It belongs to the class-I aminoacyl-tRNA synthetase family. TyrS type 1 subfamily. Homodimer.

It is found in the cytoplasm. The enzyme catalyses tRNA(Tyr) + L-tyrosine + ATP = L-tyrosyl-tRNA(Tyr) + AMP + diphosphate + H(+). Catalyzes the attachment of tyrosine to tRNA(Tyr) in a two-step reaction: tyrosine is first activated by ATP to form Tyr-AMP and then transferred to the acceptor end of tRNA(Tyr). The polypeptide is Tyrosine--tRNA ligase 1 (Clostridium acetobutylicum (strain ATCC 824 / DSM 792 / JCM 1419 / IAM 19013 / LMG 5710 / NBRC 13948 / NRRL B-527 / VKM B-1787 / 2291 / W)).